The following is a 158-amino-acid chain: 6,7-dimethyl-8-ribityllumazine synthase (158 aa).

5-amino-6-(D-ribitylamino)uracil-binding positions include Phe-22, 56 to 58, and 80 to 82; these read ALE and VVI. (2S)-2-hydroxy-3-oxobutyl phosphate is bound at residue 85-86; the sequence is ET. Residue His-88 is the Proton donor of the active site. Asn-113 contacts 5-amino-6-(D-ribitylamino)uracil. Arg-127 is a binding site for (2S)-2-hydroxy-3-oxobutyl phosphate.

It belongs to the DMRL synthase family.

The catalysed reaction is (2S)-2-hydroxy-3-oxobutyl phosphate + 5-amino-6-(D-ribitylamino)uracil = 6,7-dimethyl-8-(1-D-ribityl)lumazine + phosphate + 2 H2O + H(+). Its pathway is cofactor biosynthesis; riboflavin biosynthesis; riboflavin from 2-hydroxy-3-oxobutyl phosphate and 5-amino-6-(D-ribitylamino)uracil: step 1/2. In terms of biological role, catalyzes the formation of 6,7-dimethyl-8-ribityllumazine by condensation of 5-amino-6-(D-ribitylamino)uracil with 3,4-dihydroxy-2-butanone 4-phosphate. This is the penultimate step in the biosynthesis of riboflavin. The chain is 6,7-dimethyl-8-ribityllumazine synthase from Neisseria gonorrhoeae (strain ATCC 700825 / FA 1090).